The following is a 921-amino-acid chain: Glutamate receptor 3.7 (921 aa).

The signal sequence occupies residues M1 to C25. Residues Q26–R580 lie on the Extracellular side of the membrane. 7 N-linked (GlcNAc...) asparagine glycosylation sites follow: N214, N300, N330, N369, N396, N478, and N568. The chain crosses the membrane as a helical span at residues L581 to H601. Topologically, residues R602–R608 are cytoplasmic. Residues G609 to R629 traverse the membrane as a helical segment. Residues N630–R640 are Cytoplasmic-facing. The helical transmembrane segment at L641–L661 threads the bilayer. The Extracellular segment spans residues T662–S822. The chain crosses the membrane as a helical span at residues F823–L843. At R844 to N921 the chain is on the cytoplasmic side. Positions F896–N921 are disordered.

It belongs to the glutamate-gated ion channel (TC 1.A.10.1) family. May form heteromers. As to expression, expressed predominantly in leaves and siliques. Also detected in roots.

It is found in the membrane. In terms of biological role, glutamate-gated receptor that probably acts as a non-selective cation channel. May be involved in light-signal transduction and calcium homeostasis via the regulation of calcium influx into cells. This Arabidopsis thaliana (Mouse-ear cress) protein is Glutamate receptor 3.7 (GLR3.7).